A 461-amino-acid polypeptide reads, in one-letter code: Acetylornithine aminotransferase, mitochondrial (461 aa).

The tract at residues 36-56 is disordered; it reads YATASQLTHPDPTEDSPSGKM. Lys312 carries the N6-(pyridoxal phosphate)lysine modification.

Belongs to the class-III pyridoxal-phosphate-dependent aminotransferase family. Pyridoxal 5'-phosphate serves as cofactor.

The protein resides in the mitochondrion matrix. The enzyme catalyses N(2)-acetyl-L-ornithine + 2-oxoglutarate = N-acetyl-L-glutamate 5-semialdehyde + L-glutamate. The protein operates within amino-acid biosynthesis; L-arginine biosynthesis; N(2)-acetyl-L-ornithine from L-glutamate: step 4/4. The polypeptide is Acetylornithine aminotransferase, mitochondrial (arg-8) (Neurospora crassa (strain ATCC 24698 / 74-OR23-1A / CBS 708.71 / DSM 1257 / FGSC 987)).